Reading from the N-terminus, the 425-residue chain is Enolase (425 aa).

Glutamine 162 contributes to the (2R)-2-phosphoglycerate binding site. Residue glutamate 204 is the Proton donor of the active site. Residues aspartate 241, glutamate 282, and aspartate 309 each contribute to the Mg(2+) site. Positions 334, 363, 364, and 385 each coordinate (2R)-2-phosphoglycerate. Catalysis depends on lysine 334, which acts as the Proton acceptor.

It belongs to the enolase family. It depends on Mg(2+) as a cofactor.

It is found in the cytoplasm. Its subcellular location is the secreted. The protein resides in the cell surface. The catalysed reaction is (2R)-2-phosphoglycerate = phosphoenolpyruvate + H2O. Its pathway is carbohydrate degradation; glycolysis; pyruvate from D-glyceraldehyde 3-phosphate: step 4/5. In terms of biological role, catalyzes the reversible conversion of 2-phosphoglycerate (2-PG) into phosphoenolpyruvate (PEP). It is essential for the degradation of carbohydrates via glycolysis. This is Enolase from Corynebacterium glutamicum (strain R).